The following is a 130-amino-acid chain: MGKEAATRVRRRERKNIASGVAHVNSSFNNTTITITDAQGNTIAWSSAGTMGFKGSRKSTPYAAQVAAEDVSKKAQEHGMRTLEVEVAGPGSGRESALRALQAAGFTVTSIRDVTAIPHNGCRPRKRRRV.

Belongs to the universal ribosomal protein uS11 family. As to quaternary structure, part of the 30S ribosomal subunit. Interacts with proteins S7 and S18. Binds to IF-3.

Functionally, located on the platform of the 30S subunit, it bridges several disparate RNA helices of the 16S rRNA. Forms part of the Shine-Dalgarno cleft in the 70S ribosome. In Nitrobacter hamburgensis (strain DSM 10229 / NCIMB 13809 / X14), this protein is Small ribosomal subunit protein uS11.